We begin with the raw amino-acid sequence, 100 residues long: MAKKSMIEREKKRAKLVEKYSAKREALLEEFRTTESPLEKLEIHRQIQQLPRNSAPNRRRNRCWVTGRPRGVYRDFGLSRNVLREWAHEGLLPGVVKSSW.

Belongs to the universal ribosomal protein uS14 family. In terms of assembly, part of the 30S ribosomal subunit. Contacts proteins S3 and S10.

In terms of biological role, binds 16S rRNA, required for the assembly of 30S particles and may also be responsible for determining the conformation of the 16S rRNA at the A site. This is Small ribosomal subunit protein uS14 from Trichormus variabilis (strain ATCC 29413 / PCC 7937) (Anabaena variabilis).